The following is a 226-amino-acid chain: ATP synthase subunit a (226 aa).

A run of 5 helical transmembrane segments spans residues 18 to 38 (LSLN…TYWL), 74 to 94 (FVSL…PYIF), 100 to 120 (LTLT…YGWI), 162 to 182 (LTAN…TGPM), and 187 to 207 (IILS…SAVA).

It belongs to the ATPase A chain family. As to quaternary structure, F-type ATPases have 2 components, CF(1) - the catalytic core - and CF(0) - the membrane proton channel. CF(1) has five subunits: alpha(3), beta(3), gamma(1), delta(1), epsilon(1). CF(0) has three main subunits: a, b and c.

It localises to the mitochondrion inner membrane. In terms of biological role, mitochondrial membrane ATP synthase (F(1)F(0) ATP synthase or Complex V) produces ATP from ADP in the presence of a proton gradient across the membrane which is generated by electron transport complexes of the respiratory chain. F-type ATPases consist of two structural domains, F(1) - containing the extramembraneous catalytic core and F(0) - containing the membrane proton channel, linked together by a central stalk and a peripheral stalk. During catalysis, ATP synthesis in the catalytic domain of F(1) is coupled via a rotary mechanism of the central stalk subunits to proton translocation. Key component of the proton channel; it may play a direct role in the translocation of protons across the membrane. In Aedes aegypti (Yellowfever mosquito), this protein is ATP synthase subunit a.